We begin with the raw amino-acid sequence, 429 residues long: Ribosomal RNA small subunit methyltransferase B (429 aa).

S-adenosyl-L-methionine contacts are provided by residues 254-260, Asp-277, Asp-303, and Asp-322; that span reads CAAPGGK. The Nucleophile role is filled by Cys-375.

The protein belongs to the class I-like SAM-binding methyltransferase superfamily. RsmB/NOP family.

Its subcellular location is the cytoplasm. It carries out the reaction cytidine(967) in 16S rRNA + S-adenosyl-L-methionine = 5-methylcytidine(967) in 16S rRNA + S-adenosyl-L-homocysteine + H(+). Functionally, specifically methylates the cytosine at position 967 (m5C967) of 16S rRNA. This chain is Ribosomal RNA small subunit methyltransferase B, found in Shigella flexneri serotype 5b (strain 8401).